The chain runs to 149 residues: Protein FAM72A (149 aa).

The protein belongs to the FAM72 family. In terms of assembly, interacts with UNG. As to expression, expressed at high levels in stomach and also in kidney and, at low levels, in heart (at protein level). In the stomach, highly expressed in foveolar cells, parietal cells and chief cells (at protein level). In kidney, expressed in endothelial cells, mesangial and epithelial cells (parietal and visceral epithelium) around glomerulus (at protein level).

It localises to the cytoplasm. The protein resides in the mitochondrion. Functionally, may play a role in the regulation of cellular reactive oxygen species metabolism. May participate in cell growth regulation. This chain is Protein FAM72A (FAM72A), found in Bos taurus (Bovine).